Here is a 300-residue protein sequence, read N- to C-terminus: MLIHPQFDPVALHLGPLAIRWYGLMYLAAFIMFLWFGRLRTRQPHIAAEGWTGRDLDDMLFYGVLGVILGGRLGYVLFYKPDWYFAHPLDIFKVWEGGMAFHGGFLGVVVAMMLYARMRGRSWMQVTDFIAPMVPCGLAAGRLGNFINGELWGRVSSPNLPWSMMFPQAQGEDREWLLSHAQEAVTSGLQAVFDQYHMLPRHPSQIYQFLGEGVLFFILLWLYARKPRPMGAVSGAFLLGYGVFRFAAEFAREPDNFLGLLAANLSMGQWLSLPMILIGIAMLVWSYRRAGNGEKNQAHA.

7 consecutive transmembrane segments (helical) span residues 17–37 (LAIRWYGLMYLAAFIMFLWFG), 59–79 (MLFYGVLGVILGGRLGYVLFY), 94–114 (VWEGGMAFHGGFLGVVVAMML), 129–149 (FIAPMVPCGLAAGRLGNFING), 204–224 (SQIYQFLGEGVLFFILLWLYA), 230–250 (MGAVSGAFLLGYGVFRFAAEF), and 265–285 (LSMGQWLSLPMILIGIAMLVW). R142 contacts a 1,2-diacyl-sn-glycero-3-phospho-(1'-sn-glycerol).

The protein belongs to the Lgt family.

The protein localises to the cell inner membrane. The enzyme catalyses L-cysteinyl-[prolipoprotein] + a 1,2-diacyl-sn-glycero-3-phospho-(1'-sn-glycerol) = an S-1,2-diacyl-sn-glyceryl-L-cysteinyl-[prolipoprotein] + sn-glycerol 1-phosphate + H(+). It functions in the pathway protein modification; lipoprotein biosynthesis (diacylglyceryl transfer). Functionally, catalyzes the transfer of the diacylglyceryl group from phosphatidylglycerol to the sulfhydryl group of the N-terminal cysteine of a prolipoprotein, the first step in the formation of mature lipoproteins. The sequence is that of Phosphatidylglycerol--prolipoprotein diacylglyceryl transferase from Ralstonia pickettii (strain 12J).